Consider the following 381-residue polypeptide: tRNA (guanine(26)-N(2))-dimethyltransferase (381 aa).

Residues 6–378 (FEVHEGKAKV…APYEVFVEVM (373 aa)) enclose the Trm1 methyltransferase domain. 5 residues coordinate S-adenosyl-L-methionine: arginine 38, arginine 63, aspartate 80, aspartate 122, and alanine 123.

Belongs to the class I-like SAM-binding methyltransferase superfamily. Trm1 family. As to quaternary structure, monomer.

The catalysed reaction is guanosine(26) in tRNA + 2 S-adenosyl-L-methionine = N(2)-dimethylguanosine(26) in tRNA + 2 S-adenosyl-L-homocysteine + 2 H(+). Functionally, dimethylates a single guanine residue at position 26 of a number of tRNAs using S-adenosyl-L-methionine as donor of the methyl groups. This chain is tRNA (guanine(26)-N(2))-dimethyltransferase, found in Pyrococcus furiosus (strain ATCC 43587 / DSM 3638 / JCM 8422 / Vc1).